The sequence spans 337 residues: Glyceraldehyde-3-phosphate dehydrogenase (337 aa).

Residues 11-12 (TI) and Gly-111 contribute to the NAD(+) site. 140-142 (SCN) is a D-glyceraldehyde 3-phosphate binding site. Cys-141 acts as the Nucleophile in catalysis. Residue Arg-169 coordinates NAD(+). Residues 177–196 (KKGPINSIVPTTEVPSHHGP) form a disordered region. 194–195 (HG) is a D-glyceraldehyde 3-phosphate binding site. Position 301 (Gln-301) interacts with NAD(+).

It belongs to the glyceraldehyde-3-phosphate dehydrogenase family. In terms of assembly, homotetramer.

The protein localises to the cytoplasm. The catalysed reaction is D-glyceraldehyde 3-phosphate + phosphate + NADP(+) = (2R)-3-phospho-glyceroyl phosphate + NADPH + H(+). The enzyme catalyses D-glyceraldehyde 3-phosphate + phosphate + NAD(+) = (2R)-3-phospho-glyceroyl phosphate + NADH + H(+). The protein operates within carbohydrate degradation; glycolysis; pyruvate from D-glyceraldehyde 3-phosphate: step 1/5. This chain is Glyceraldehyde-3-phosphate dehydrogenase, found in Methanosphaera stadtmanae (strain ATCC 43021 / DSM 3091 / JCM 11832 / MCB-3).